The sequence spans 289 residues: Transcription factor MafA (289 aa).

A compositionally biased stretch (low complexity) spans 52 to 73 (STPISTPCSSVPSSPSFCAPSP). Disordered regions lie at residues 52 to 87 (STPISTPCSSVPSSPSFCAPSPGAQSGVNPSNPNAA) and 126 to 164 (HHHHHHHQGYDGFRGQQYPGDEMAPSGHHHQVHHHHHHH). Positions 74–87 (GAQSGVNPSNPNAA) are enriched in polar residues. Residues 152–164 (GHHHQVHHHHHHH) are compositionally biased toward basic residues. The segment at 201–226 (RLKQKRRTLKNRGYAQSCRYKRVQQR) is basic motif. The 64-residue stretch at 201–264 (RLKQKRRTLK…DLYKDKYEKL (64 aa)) folds into the bZIP domain. The interval 229-250 (LETEKCQLQSQVEQLKQEVSRL) is leucine-zipper. Residues 266 to 289 (SRSFTTRESPPQGNPGKANADFFM) form a disordered region. Polar residues predominate over residues 267–276 (RSFTTRESPP).

This sequence belongs to the bZIP family. Maf subfamily.

The protein resides in the nucleus. Its function is as follows. Transcription factor, possibly involved in transcription regulation during lens development. This Xenopus tropicalis (Western clawed frog) protein is Transcription factor MafA (mafa).